A 646-amino-acid polypeptide reads, in one-letter code: Vitamin K-dependent protein S (646 aa).

The propeptide occupies 1 to 12 (GHASQVLVRKRR). In terms of domain architecture, Gla spans 13–58 (ANSMLEETKKGNLERECIEELCNKEEAREVFENDPETDYFYPKYLG). 4-carboxyglutamate is present on residues Glu18, Glu19, Glu26, Glu28, Glu31, Glu32, Glu37, Glu38, Glu41, Glu44, and Glu48. Cys29 and Cys34 are joined by a disulfide. The interval 59-87 (CLGSFRAKLFTATRRSANGYPDLRSCVNA) is thrombin-sensitive. The 39-residue stretch at 88–126 (IPDQCNPLPCSEEGYLNCKDGQATFTCICKPGWQGEKCE) folds into the EGF-like 1 domain. Intrachain disulfides connect Cys92/Cys105, Cys97/Cys114, Cys116/Cys125, Cys132/Cys146, Cys142/Cys155, Cys157/Cys170, Cys176/Cys188, Cys183/Cys197, Cys199/Cys212, Cys218/Cys227, Cys223/Cys236, Cys238/Cys253, and Cys420/Cys446. Asp107 is subject to (3R)-3-hydroxyaspartate. Residues 128–171 (DINECKDPTNINGGCSQICDNTAGSYHCSCKSGFVMLANEKDCK) form the EGF-like 2; calcium-binding domain. One can recognise an EGF-like 3; calcium-binding domain in the interval 172–213 (DMDECSVKPSVCGTAVCKNTPGDFECECSEGYRYNPTAKSCE). Positions 214–254 (DIDECSENMCAQLCVNYPGGYSCYCDGKKGFKLAQDKKSCE) constitute an EGF-like 4; calcium-binding domain. Laminin G-like domains are found at residues 270–446 (LLYL…KKHC) and 455–636 (YYPG…AHSC). 2 N-linked (GlcNAc...) asparagine glycosylation sites follow: Asn470 and Asn480. Cys609 and Cys636 are joined by a disulfide.

Interacts with C4b-binding protein, a regulator of the complex system. In rabbit plasma however, protein S appears to be present only in free form. The iron and 2-oxoglutarate dependent 3-hydroxylation of aspartate and asparagine is (R) stereospecific within EGF domains. Plasma.

It is found in the secreted. In terms of biological role, anticoagulant plasma protein; it is a cofactor to activated protein C in the degradation of coagulation factors Va and VIIIa. It helps to prevent coagulation and stimulating fibrinolysis. This Oryctolagus cuniculus (Rabbit) protein is Vitamin K-dependent protein S (PROS1).